Consider the following 104-residue polypeptide: Secretoglobin family 3A member 1 (104 aa).

Positions 1 to 21 are cleaved as a signal peptide; that stretch reads MKLTTTFLVLCVALLSDSGVA.

It belongs to the secretoglobin family. UGRP subfamily. Homodimer; disulfide-linked. In terms of tissue distribution, highly expressed in lung, where it localizes to epithelial cells lining the trachea and bronchi. Expression in lung is mainly restricted to bronchi, submucosal glands of the trachea, and tracheal epithelium, with little expression in terminal bronchioles. Expressed in uterus where it localizes to epithelial cells of the uterine glands. Also detected in heart, stomach and small intestine.

The protein resides in the secreted. Secreted cytokine-like protein. Inhibits cell growth in vitro. This is Secretoglobin family 3A member 1 (Scgb3a1) from Mus musculus (Mouse).